Here is an 804-residue protein sequence, read N- to C-terminus: Lon protease (804 aa).

Residues 1-23 are disordered; it reads MSADSENETSESSPAGEATASTS. In terms of domain architecture, Lon N-terminal spans 30-224; sequence LILLPVRNAV…KVLDAVAGRI (195 aa). 376 to 383 contacts ATP; that stretch reads GPPGVGKT. The 182-residue stretch at 612 to 793 folds into the Lon proteolytic domain; that stretch reads TSLPGVVTGL…DDAVREIIED (182 aa). Residues S699 and K742 contribute to the active site.

Belongs to the peptidase S16 family. Homohexamer. Organized in a ring with a central cavity.

The protein localises to the cytoplasm. The catalysed reaction is Hydrolysis of proteins in presence of ATP.. Its function is as follows. ATP-dependent serine protease that mediates the selective degradation of mutant and abnormal proteins as well as certain short-lived regulatory proteins. Required for cellular homeostasis and for survival from DNA damage and developmental changes induced by stress. Degrades polypeptides processively to yield small peptide fragments that are 5 to 10 amino acids long. Binds to DNA in a double-stranded, site-specific manner. The sequence is that of Lon protease from Paraburkholderia phytofirmans (strain DSM 17436 / LMG 22146 / PsJN) (Burkholderia phytofirmans).